Here is a 31-residue protein sequence, read N- to C-terminus: Diuretic hormone class 2 (31 aa).

At Pro31 the chain carries Proline amide.

Belongs to the diuretic hormone class 2 family.

The protein localises to the secreted. In terms of biological role, regulation of fluid secretion. Stimulates primary urine secretion by Malpighian tubules and causes a dose-dependent stimulation of cAMP levels in the tubules. Has a nonselective effect on Na(+)/K(+) ion transport. In vitro, primarily elevates intracellular Ca(2+). The sequence is that of Diuretic hormone class 2 from Apis mellifera (Honeybee).